Here is a 212-residue protein sequence, read N- to C-terminus: ATP-dependent Clp protease proteolytic subunit (212 aa).

Ser106 serves as the catalytic Nucleophile. His131 is a catalytic residue.

It belongs to the peptidase S14 family. In terms of assembly, fourteen ClpP subunits assemble into 2 heptameric rings which stack back to back to give a disk-like structure with a central cavity, resembling the structure of eukaryotic proteasomes.

It localises to the cytoplasm. The catalysed reaction is Hydrolysis of proteins to small peptides in the presence of ATP and magnesium. alpha-casein is the usual test substrate. In the absence of ATP, only oligopeptides shorter than five residues are hydrolyzed (such as succinyl-Leu-Tyr-|-NHMec, and Leu-Tyr-Leu-|-Tyr-Trp, in which cleavage of the -Tyr-|-Leu- and -Tyr-|-Trp bonds also occurs).. Functionally, cleaves peptides in various proteins in a process that requires ATP hydrolysis. Has a chymotrypsin-like activity. Plays a major role in the degradation of misfolded proteins. The chain is ATP-dependent Clp protease proteolytic subunit from Rhodopseudomonas palustris (strain HaA2).